Consider the following 500-residue polypeptide: L-arabinose isomerase (500 aa).

4 residues coordinate Mn(2+): E306, E333, H350, and H450.

Belongs to the arabinose isomerase family. In terms of assembly, homohexamer. It depends on Mn(2+) as a cofactor.

It carries out the reaction beta-L-arabinopyranose = L-ribulose. The protein operates within carbohydrate degradation; L-arabinose degradation via L-ribulose; D-xylulose 5-phosphate from L-arabinose (bacterial route): step 1/3. Functionally, catalyzes the conversion of L-arabinose to L-ribulose. This Salmonella choleraesuis (strain SC-B67) protein is L-arabinose isomerase.